The chain runs to 316 residues: Protein lifeguard 2 (316 aa).

The tract at residues 1–49 is disordered; that stretch reads MTQGKLSVANKAPGTEGQQQANGEKKDAPAVPSAPPSYEEATSGEGLKA. 3 consecutive transmembrane segments (helical) span residues 106-126, 138-158, and 165-185; these read VYTILLVQLLVTLAVVALFTF, PGWYWASYAVFFATYLTLACC, and FPWNLILLTIFTLSMAYLTGM. Asn-191 carries an N-linked (GlcNAc...) asparagine glycan. A run of 4 helical transmembrane segments spans residues 194-214, 225-245, 251-271, and 290-310; these read SVLLCLGITALVCLSVTIFSF, GVLFVLLMTLFFSGLLLAILL, PWLHAVYAVLGAGVFTLFLAF, and IFGALNIYLDIIYIFTFFLQL.

The protein belongs to the BI1 family. LFG subfamily. As to quaternary structure, interacts with FAS/TNFRSF6 and BAX. As to expression, expressed at high levels on dendrites and to a lesser extent on the soma and axons of neurons in various regions of brain.

The protein localises to the cell membrane. The protein resides in the membrane raft. It is found in the postsynaptic cell membrane. Functionally, antiapoptotic protein which protects cells uniquely from Fas-induced apoptosis. Regulates Fas-mediated apoptosis in neurons by interfering with caspase-8 activation. Plays a role in cerebellar development by affecting cerebellar size, internal granular layer (IGL) thickness, and Purkinje cell (PC) development. The protein is Protein lifeguard 2 (Faim2) of Rattus norvegicus (Rat).